The primary structure comprises 354 residues: Uroporphyrinogen decarboxylase (354 aa).

Substrate contacts are provided by residues 27-31 (RQAGR), Asp-77, Tyr-154, Thr-209, and His-327.

Belongs to the uroporphyrinogen decarboxylase family. As to quaternary structure, homodimer.

The protein resides in the cytoplasm. It carries out the reaction uroporphyrinogen III + 4 H(+) = coproporphyrinogen III + 4 CO2. It participates in porphyrin-containing compound metabolism; protoporphyrin-IX biosynthesis; coproporphyrinogen-III from 5-aminolevulinate: step 4/4. Functionally, catalyzes the decarboxylation of four acetate groups of uroporphyrinogen-III to yield coproporphyrinogen-III. The sequence is that of Uroporphyrinogen decarboxylase from Pseudomonas putida (strain W619).